The sequence spans 470 residues: A-type ATP synthase subunit B (470 aa).

This sequence belongs to the ATPase alpha/beta chains family. Has multiple subunits with at least A(3), B(3), C, D, E, F, H, I and proteolipid K(x).

It is found in the cell membrane. Its function is as follows. Component of the A-type ATP synthase that produces ATP from ADP in the presence of a proton gradient across the membrane. The B chain is a regulatory subunit. The polypeptide is A-type ATP synthase subunit B (Haloarcula marismortui (strain ATCC 43049 / DSM 3752 / JCM 8966 / VKM B-1809) (Halobacterium marismortui)).